The chain runs to 125 residues: Bublin coiled-coil protein (125 aa).

A coiled-coil region spans residues 46–95 (IRKLDTQLDHLNDYMSKMEERLKAHNDRMMETLKQQKEEREKRRRSFHER). The tract at residues 79–125 (KQQKEEREKRRRSFHERMSQNQSEDEEFKKQMSSILKRVQSVKRTEK) is disordered.

As to expression, expressed in many epithelial tissues, including the pharynx, intestine, excretory canal and hypodermis.

It localises to the cell junction. Its subcellular location is the cytoplasm. It is found in the cytoskeleton. In terms of biological role, dynamic component of the endotube in intestinal cells, interacts with intermediate filament and regulates intestinal lumen morphology. This chain is Bublin coiled-coil protein, found in Caenorhabditis elegans.